Consider the following 295-residue polypeptide: Fructose-bisphosphate aldolase class 1 (295 aa).

The Proton acceptor role is filled by E176. The active-site Schiff-base intermediate with dihydroxyacetone-P is K213.

The protein belongs to the class I fructose-bisphosphate aldolase family.

It catalyses the reaction beta-D-fructose 1,6-bisphosphate = D-glyceraldehyde 3-phosphate + dihydroxyacetone phosphate. Its pathway is carbohydrate degradation; glycolysis; D-glyceraldehyde 3-phosphate and glycerone phosphate from D-glucose: step 4/4. In Clostridium beijerinckii (strain ATCC 51743 / NCIMB 8052) (Clostridium acetobutylicum), this protein is Fructose-bisphosphate aldolase class 1.